Consider the following 142-residue polypeptide: Deoxyuridine 5'-triphosphate nucleotidohydrolase (142 aa).

Substrate-binding positions include 62–64 (RSG), N75, and 79–81 (TID).

Belongs to the dUTPase family. It depends on Mg(2+) as a cofactor.

It carries out the reaction dUTP + H2O = dUMP + diphosphate + H(+). It participates in pyrimidine metabolism; dUMP biosynthesis; dUMP from dCTP (dUTP route): step 2/2. In terms of biological role, this enzyme is involved in nucleotide metabolism: it produces dUMP, the immediate precursor of thymidine nucleotides and it decreases the intracellular concentration of dUTP so that uracil cannot be incorporated into DNA. In Crocosphaera subtropica (strain ATCC 51142 / BH68) (Cyanothece sp. (strain ATCC 51142)), this protein is Deoxyuridine 5'-triphosphate nucleotidohydrolase.